The primary structure comprises 446 residues: Glutamine synthetase (446 aa).

A GS beta-grasp domain is found at 18 to 103; sequence ENVRYLRLQF…LICDVYKTDG (86 aa). Residues 110-446 form the GS catalytic domain; the sequence is PRANLKRVLK…WERDQYMKQY (337 aa). Residues Glu134 and Glu136 each coordinate Mg(2+). Glu186 provides a ligand contact to ATP. Mg(2+) is bound by residues Glu191 and Glu198. L-glutamate contacts are provided by residues 242 to 243 and Gly243; that span reads NG. His247 is a Mg(2+) binding site. Residue Ser251 participates in ATP binding. 3 residues coordinate L-glutamate: Arg300, Glu306, and Arg318. Positions 318 and 323 each coordinate ATP. Glu335 is a Mg(2+) binding site. Arg337 is an L-glutamate binding site.

The protein belongs to the glutamine synthetase family. As to quaternary structure, oligomer of 12 subunits arranged in the form of two hexagons. In its feedback-inhibited form, interacts with TnrA in order to block its DNA-binding activity. Mg(2+) is required as a cofactor.

The protein resides in the cytoplasm. The catalysed reaction is L-glutamate + NH4(+) + ATP = L-glutamine + ADP + phosphate + H(+). With respect to regulation, inhibited by glutamine. Glutamine synthetase (GS) is an unusual multitasking protein that functions as an enzyme, a transcription coregulator, and a chaperone in ammonium assimilation and in the regulation of genes involved in nitrogen metabolism. It catalyzes the ATP-dependent biosynthesis of glutamine from glutamate and ammonia. Feedback-inhibited GlnA also interacts with and regulates the activity of the transcriptional regulator TnrA. During nitrogen limitation, TnrA is in its DNA-binding active state and turns on the transcription of genes required for nitrogen assimilation. Under conditions of nitrogen excess, feedback-inhibited GlnA forms a stable complex with TnrA, which inhibits its DNA-binding activity. In contrast, feedback-inhibited GlnA acts as a chaperone to stabilize the DNA-binding activity of GlnR, which represses the transcription of nitrogen assimilation genes. The protein is Glutamine synthetase of Staphylococcus aureus (strain N315).